The sequence spans 963 residues: Phosphoenolpyruvate carboxylase 2 (963 aa).

Ser-11 bears the Phosphoserine mark. Active-site residues include His-172 and Lys-599. Ser-701 bears the Phosphoserine mark.

It belongs to the PEPCase type 1 family. As to quaternary structure, homotetramer. The cofactor is Mg(2+). As to expression, expressed in all plant organs, with higher levels in stems and leaves.

Its subcellular location is the cytoplasm. The catalysed reaction is oxaloacetate + phosphate = phosphoenolpyruvate + hydrogencarbonate. By light-reversible phosphorylation. Through the carboxylation of phosphoenolpyruvate (PEP) it forms oxaloacetate, a four-carbon dicarboxylic acid source for the tricarboxylic acid cycle. This Arabidopsis thaliana (Mouse-ear cress) protein is Phosphoenolpyruvate carboxylase 2 (PPC2).